The sequence spans 109 residues: Iron-sulfur cluster assembly protein CyaY (109 aa).

The protein belongs to the frataxin family.

In terms of biological role, involved in iron-sulfur (Fe-S) cluster assembly. May act as a regulator of Fe-S biogenesis. The sequence is that of Iron-sulfur cluster assembly protein CyaY from Shewanella baltica (strain OS155 / ATCC BAA-1091).